The chain runs to 294 residues: Cytidine deaminase (294 aa).

CMP/dCMP-type deaminase domains lie at 48-168 (DEDA…FGPK) and 186-294 (LTGD…VLLG). Position 89–91 (89–91 (NME)) interacts with substrate. Position 102 (H102) interacts with Zn(2+). E104 serves as the catalytic Proton donor. Zn(2+) contacts are provided by C129 and C132.

Belongs to the cytidine and deoxycytidylate deaminase family. As to quaternary structure, homodimer. Zn(2+) is required as a cofactor.

The catalysed reaction is cytidine + H2O + H(+) = uridine + NH4(+). It catalyses the reaction 2'-deoxycytidine + H2O + H(+) = 2'-deoxyuridine + NH4(+). In terms of biological role, this enzyme scavenges exogenous and endogenous cytidine and 2'-deoxycytidine for UMP synthesis. This chain is Cytidine deaminase, found in Salmonella choleraesuis (strain SC-B67).